Reading from the N-terminus, the 140-residue chain is Small ribosomal subunit protein uS12 (140 aa).

D102 is subject to 3-methylthioaspartic acid.

The protein belongs to the universal ribosomal protein uS12 family. In terms of assembly, part of the 30S ribosomal subunit. Contacts proteins S8 and S17. May interact with IF1 in the 30S initiation complex.

In terms of biological role, with S4 and S5 plays an important role in translational accuracy. Interacts with and stabilizes bases of the 16S rRNA that are involved in tRNA selection in the A site and with the mRNA backbone. Located at the interface of the 30S and 50S subunits, it traverses the body of the 30S subunit contacting proteins on the other side and probably holding the rRNA structure together. The combined cluster of proteins S8, S12 and S17 appears to hold together the shoulder and platform of the 30S subunit. This chain is Small ribosomal subunit protein uS12, found in Geobacillus stearothermophilus (Bacillus stearothermophilus).